A 446-amino-acid polypeptide reads, in one-letter code: MLDGIRDAVRKFLGGNTSYEVAVEEFIKDIQKALISSDVQVKLVFSLTNKIKERLKKETPPSNLERREWFIKIVYDELSALFGGDKEPEVNPKSIPWVIMLVGVQGTGKTTTAGKLAYFYKKRGYKVALVGADVYRPAALEQLQQIGKQINVPVYGEPGSQDAVGIAKRGVEKFLSERYELVIVDTAGRHGYGEEVKLLEEMKDIYEKIKPNEVILVIDASLGQKAYDLAKRFHEASNVGSIIITKMDGTAKGGGALSAVAATGAPIKFIGVGEKIDELEVFNPRRFVARILGMGDLEAIIEKMKAMEDYEGIQKKMGEVMTGKSKLTLRDMYKQIVAVRKMGPLSKILQLIPGMNMMGDIPEDQVKVGEQKMQRWLSIMNSMTYQELDNPSIIDKQRMRRIAMGSGTEVEEVRELIEHFNTVQRTLKMLKRRKKDVEKLFGQMGG.

Residues Gly103–Thr110, Asp185–Arg189, and Thr245–Asp248 contribute to the GTP site.

It belongs to the GTP-binding SRP family. SRP54 subfamily. As to quaternary structure, part of the signal recognition particle protein translocation system, which is composed of SRP and FtsY. Archaeal SRP consists of a 7S RNA molecule of 300 nucleotides and two protein subunits: SRP54 and SRP19.

It localises to the cytoplasm. The enzyme catalyses GTP + H2O = GDP + phosphate + H(+). In terms of biological role, involved in targeting and insertion of nascent membrane proteins into the cytoplasmic membrane. Binds to the hydrophobic signal sequence of the ribosome-nascent chain (RNC) as it emerges from the ribosomes. The SRP-RNC complex is then targeted to the cytoplasmic membrane where it interacts with the SRP receptor FtsY. This chain is Signal recognition particle 54 kDa protein, found in Metallosphaera sedula (strain ATCC 51363 / DSM 5348 / JCM 9185 / NBRC 15509 / TH2).